A 212-amino-acid polypeptide reads, in one-letter code: Glycerol-3-phosphate acyltransferase (212 aa).

The next 4 helical transmembrane spans lie at 3-23 (ILLAALVAYLIGSVSFAVVVS), 78-98 (DVAVAWVAIAVFLGHLYPVFF), 115-135 (AVHPVLGLATALTWLIVAFFF), and 155-177 (FLFGTGHNPVAWAVLAMSVLLVW).

It belongs to the PlsY family. As to quaternary structure, probably interacts with PlsX.

It localises to the cell inner membrane. It catalyses the reaction an acyl phosphate + sn-glycerol 3-phosphate = a 1-acyl-sn-glycero-3-phosphate + phosphate. The protein operates within lipid metabolism; phospholipid metabolism. In terms of biological role, catalyzes the transfer of an acyl group from acyl-phosphate (acyl-PO(4)) to glycerol-3-phosphate (G3P) to form lysophosphatidic acid (LPA). This enzyme utilizes acyl-phosphate as fatty acyl donor, but not acyl-CoA or acyl-ACP. In Burkholderia lata (strain ATCC 17760 / DSM 23089 / LMG 22485 / NCIMB 9086 / R18194 / 383), this protein is Glycerol-3-phosphate acyltransferase.